The following is a 94-amino-acid chain: uncharacterized protein (94 aa).

Residues 1–23 (MVLLAGTRPQGGEARCMIPPPPS) are disordered.

This is an uncharacterized protein from Homo sapiens (Human).